The primary structure comprises 911 residues: Bifunctional aspartokinase/homoserine dehydrogenase 1, chloroplastic (911 aa).

A chloroplast-targeting transit peptide spans 1–82 (MPVVSLAKVV…VENGHLPKGD (82 aa)). Positions 83–331 (SWAVHKFGGT…VSEAVVLKTL (249 aa)) are aspartokinase. Residues 332-557 (SYQEAWEMSY…LSRTTLAVGI (226 aa)) form an interface region. ACT domains are found at residues 407–482 (VEGT…IIPN) and 488–565 (AVGQ…LIGG). Positions 558-911 (IGPGLIGGTL…RLAFYLGAPS (354 aa)) are homoserine dehydrogenase. Residues I563 and T644 each contribute to the NAD(+) site. NADP(+) contacts are provided by I563, T644, and K668. Residues I563, T644, and K668 each coordinate NADPH. Residues E695, V698, A700, and L702 each contribute to the Na(+) site. NADP(+)-binding residues include G753 and E756. 2 residues coordinate L-homoserine: E756 and D767. Catalysis depends on K771, which acts as the Proton donor. G888 is an NAD(+) binding site. NADP(+) is bound at residue G888. G888 is a binding site for NADPH.

The protein in the N-terminal section; belongs to the aspartokinase family. It in the C-terminal section; belongs to the homoserine dehydrogenase family. As to quaternary structure, homo- or heterodimer. Requires a metal cation as cofactor.

It is found in the plastid. The protein localises to the chloroplast. It catalyses the reaction L-homoserine + NADP(+) = L-aspartate 4-semialdehyde + NADPH + H(+). The catalysed reaction is L-homoserine + NAD(+) = L-aspartate 4-semialdehyde + NADH + H(+). It carries out the reaction L-aspartate + ATP = 4-phospho-L-aspartate + ADP. Its pathway is amino-acid biosynthesis; L-lysine biosynthesis via DAP pathway; (S)-tetrahydrodipicolinate from L-aspartate: step 1/4. The protein operates within amino-acid biosynthesis; L-methionine biosynthesis via de novo pathway; L-homoserine from L-aspartate: step 1/3. It functions in the pathway amino-acid biosynthesis; L-methionine biosynthesis via de novo pathway; L-homoserine from L-aspartate: step 3/3. It participates in amino-acid biosynthesis; L-threonine biosynthesis; L-threonine from L-aspartate: step 1/5. Its pathway is amino-acid biosynthesis; L-threonine biosynthesis; L-threonine from L-aspartate: step 3/5. Its activity is regulated as follows. Inhibition of aspartate kinase activity by threonine and leucine and 3-fold activation by cysteine, isoleucine, valine, serine and alanine at 2.5 mM. Partial inhibition of homoserine dehydrogenase activity by threonine and cysteine (14% of activity remaining at saturation with either amino acid). No synergy between the effectors for both activation or inhibition. Bifunctional aspartate kinase and homoserine dehydrogenase that catalyzes the first and the third steps toward the synthesis of lysine, methionine and threonine from aspartate. The protein is Bifunctional aspartokinase/homoserine dehydrogenase 1, chloroplastic of Arabidopsis thaliana (Mouse-ear cress).